The sequence spans 135 residues: Sex-regulated protein janus-A (135 aa).

Lys-37 contributes to the substrate binding site. His-63 acts as the Proton acceptor in catalysis. Substrate is bound at residue 104–106; sequence SQG.

It belongs to the janus family.

Functionally, janA and janB regulate somatic sex differentiation. The polypeptide is Sex-regulated protein janus-A (janA) (Drosophila simulans (Fruit fly)).